A 117-amino-acid chain; its full sequence is Elafin (117 aa).

The signal sequence occupies residues 1 to 22; sequence MRASSFLIVVVFLIAGTLVLEA. A propeptide spanning residues 23–60 is cleaved from the precursor; the sequence is AVTGVPVKGQDTVKGRVPFNGQDPVKGQVSVKGQDKVK. SVP-1 clotting repeat units follow at residues 29–54 and 55–72; these read VKGQ…VSVK and GQDK…VSTK. Residues 29–72 are 2 X tandem repeats of SVP-1 like motif; it reads VKGQDTVKGRVPFNGQDPVKGQVSVKGQDKVKAQEPVKGPVSTK. In terms of domain architecture, WAP spans 69–117; it reads VSTKPGSCPIILIRCAMLNPPNRCLKDTDCPGIKKCCEGSCGMACFVPQ. Disulfide bonds link cysteine 76–cysteine 105, cysteine 83–cysteine 109, cysteine 92–cysteine 104, and cysteine 98–cysteine 113.

Its subcellular location is the secreted. Its function is as follows. Neutrophil and pancreatic elastase-specific inhibitor of skin. It may prevent elastase-mediated tissue proteolysis. Has been shown to inhibit the alpha-4-beta-2/CHRNA2-CHRNB2 nicotinic acetylcholine receptor and to produce a weak inhibition on Kv11.1/KCNH2/ERG1 and on the transient receptor potential cation channel subfamily V member 1 (TRPV1). The polypeptide is Elafin (PI3) (Homo sapiens (Human)).